The primary structure comprises 416 residues: Gamma-glutamyl phosphate reductase (416 aa).

The protein belongs to the gamma-glutamyl phosphate reductase family.

The protein localises to the cytoplasm. It catalyses the reaction L-glutamate 5-semialdehyde + phosphate + NADP(+) = L-glutamyl 5-phosphate + NADPH + H(+). It functions in the pathway amino-acid biosynthesis; L-proline biosynthesis; L-glutamate 5-semialdehyde from L-glutamate: step 2/2. Catalyzes the NADPH-dependent reduction of L-glutamate 5-phosphate into L-glutamate 5-semialdehyde and phosphate. The product spontaneously undergoes cyclization to form 1-pyrroline-5-carboxylate. This chain is Gamma-glutamyl phosphate reductase, found in Streptococcus pyogenes serotype M3 (strain ATCC BAA-595 / MGAS315).